A 125-amino-acid polypeptide reads, in one-letter code: Ribonuclease P protein component (125 aa).

It belongs to the RnpA family. In terms of assembly, consists of a catalytic RNA component (M1 or rnpB) and a protein subunit.

The enzyme catalyses Endonucleolytic cleavage of RNA, removing 5'-extranucleotides from tRNA precursor.. RNaseP catalyzes the removal of the 5'-leader sequence from pre-tRNA to produce the mature 5'-terminus. It can also cleave other RNA substrates such as 4.5S RNA. The protein component plays an auxiliary but essential role in vivo by binding to the 5'-leader sequence and broadening the substrate specificity of the ribozyme. This Rhodococcus jostii (strain RHA1) protein is Ribonuclease P protein component.